A 183-amino-acid polypeptide reads, in one-letter code: ATP synthase subunit b, chloroplastic (183 aa).

A helical transmembrane segment spans residues 27–49; that stretch reads LATNLINLTVVVGVLIFFGKGVL.

The protein belongs to the ATPase B chain family. F-type ATPases have 2 components, F(1) - the catalytic core - and F(0) - the membrane proton channel. F(1) has five subunits: alpha(3), beta(3), gamma(1), delta(1), epsilon(1). F(0) has four main subunits: a(1), b(1), b'(1) and c(10-14). The alpha and beta chains form an alternating ring which encloses part of the gamma chain. F(1) is attached to F(0) by a central stalk formed by the gamma and epsilon chains, while a peripheral stalk is formed by the delta, b and b' chains.

Its subcellular location is the plastid. The protein localises to the chloroplast thylakoid membrane. Its function is as follows. F(1)F(0) ATP synthase produces ATP from ADP in the presence of a proton or sodium gradient. F-type ATPases consist of two structural domains, F(1) containing the extramembraneous catalytic core and F(0) containing the membrane proton channel, linked together by a central stalk and a peripheral stalk. During catalysis, ATP synthesis in the catalytic domain of F(1) is coupled via a rotary mechanism of the central stalk subunits to proton translocation. Functionally, component of the F(0) channel, it forms part of the peripheral stalk, linking F(1) to F(0). In Hordeum vulgare (Barley), this protein is ATP synthase subunit b, chloroplastic.